Reading from the N-terminus, the 89-residue chain is Probable Fe(2+)-trafficking protein (89 aa).

It belongs to the Fe(2+)-trafficking protein family.

Could be a mediator in iron transactions between iron acquisition and iron-requiring processes, such as synthesis and/or repair of Fe-S clusters in biosynthetic enzymes. In Stenotrophomonas maltophilia (strain R551-3), this protein is Probable Fe(2+)-trafficking protein.